Reading from the N-terminus, the 472-residue chain is 4-O-methyl-glucuronoyl methylesterase 1 (472 aa).

The first 20 residues, 1–20 (MKSAAYLAALAAVLPAYVNA), serve as a signal peptide directing secretion. Positions 21 to 56 (QAQEWGQCGGIGWTGATTCVSGTVCTVLNPYYSQCL) constitute a CBM1 domain. Residues 62-97 (TAPPPPPPPPTSVSSSSSSSTSSAPPSGPSGTSPTC) are disordered. Positions 63–72 (APPPPPPPPT) are enriched in pro residues. Positions 73-96 (SVSSSSSSSTSSAPPSGPSGTSPT) are enriched in low complexity. 3 disulfides stabilise this stretch: Cys-97-Cys-131, Cys-283-Cys-419, and Cys-315-Cys-391. The GXSYXG catalytic site motif signature appears at 282 to 287 (GCSRDG). The active-site Nucleophile is the Ser-284. Substrate contacts are provided by Lys-288, Gln-330, Glu-338, and Trp-382. His-418 (proton donor/acceptor) is an active-site residue. N-linked (GlcNAc...) asparagine glycosylation is present at Asn-465.

It belongs to the carbohydrate esterase 15 (CE15) family.

The protein resides in the secreted. The catalysed reaction is a 4-O-methyl-alpha-D-glucuronosyl ester derivative + H2O = 4-O-methyl-alpha-D-glucuronate derivative + an alcohol + H(+). Glucuronoyl esterase which may play a significant role in biomass degradation, as it is considered to disconnect hemicellulose from lignin through the hydrolysis of the ester bond between 4-O-methyl-D-glucuronic acid residues of glucuronoxylans and aromatic alcohols of lignin. Can hydrolyze benzyl glucuronic acid (BnGlcA), allyl glucuronic acid (allylGlcA) and to a lower degree methyl glucuronic acid (MeGlcA) in vitro. This chain is 4-O-methyl-glucuronoyl methylesterase 1, found in Phanerochaete chrysosporium (strain RP-78 / ATCC MYA-4764 / FGSC 9002) (White-rot fungus).